The primary structure comprises 417 residues: uncharacterized protein (417 aa).

This is an uncharacterized protein from Sulfolobus islandicus rod-shaped virus 1 (SIRV-1).